A 96-amino-acid polypeptide reads, in one-letter code: Dynein light chain roadblock-type 1 (96 aa).

Position 2 is an N-acetylalanine (A2).

This sequence belongs to the GAMAD family. Homodimer. The cytoplasmic dynein 1 complex consists of two catalytic heavy chains (HCs) and a number of non-catalytic subunits presented by intermediate chains (ICs), light intermediate chains (LICs) and light chains (LCs); the composition seems to vary in respect to the IC, LIC and LC composition. The heavy chain homodimer serves as a scaffold for the probable homodimeric assembly of the respective non-catalytic subunits. The ICs and LICs bind directly to the HC dimer and the LCs assemble on the IC dimer. Interacts with DYNLRB2. Interacts with DYNC1I1 and DYNC1I2. Interacts with RAB6A isoform 1 (GTP-bound); the interaction is direct. Interacts with RAB6A isoform 2 (GDP-bound); the interaction is direct. Interacts with RAB6B (GDP-bound). High expression in heart, liver, brain and pancreas; moderate in placenta, skeletal muscle and kidney; low in lung, prostate, testis, small intestine and colon. Isoform 1 expression is up-regulated in 64% hepatocellular carcinoma (HCC) patients.

Its subcellular location is the cytoplasm. The protein resides in the cytoskeleton. In terms of biological role, acts as one of several non-catalytic accessory components of the cytoplasmic dynein 1 complex that are thought to be involved in linking dynein to cargos and to adapter proteins that regulate dynein function. Cytoplasmic dynein 1 acts as a motor for the intracellular retrograde motility of vesicles and organelles along microtubules. In Homo sapiens (Human), this protein is Dynein light chain roadblock-type 1.